A 36-amino-acid chain; its full sequence is Adenylate kinase (36 aa).

An ATP-binding site is contributed by 10–15 (GAGKGT). An NMP region spans residues 30–36 (ATGDLFR). T31 and R36 together coordinate AMP.

The protein belongs to the adenylate kinase family. As to quaternary structure, monomer.

The protein resides in the cytoplasm. It carries out the reaction AMP + ATP = 2 ADP. The protein operates within purine metabolism; AMP biosynthesis via salvage pathway; AMP from ADP: step 1/1. In terms of biological role, catalyzes the reversible transfer of the terminal phosphate group between ATP and AMP. Plays an important role in cellular energy homeostasis and in adenine nucleotide metabolism. The polypeptide is Adenylate kinase (adk) (Streptomyces griseus).